Reading from the N-terminus, the 1185-residue chain is Pyruvate carboxylase (1185 aa).

Residues 32 to 484 (KFTKVLVANR…WTTFIDDTPE (453 aa)) enclose the Biotin carboxylation domain. Lysine 150, glutamate 234, and histidine 269 together coordinate ATP. Positions 154-351 (RAIAIRCGVP…IVSAQLHVAA (198 aa)) constitute an ATP-grasp domain. Arginine 326 is a catalytic residue. Residues 570–838 (GLIMDTTWRD…QLEFDNNQLR (269 aa)) form the Pyruvate carboxyltransferase domain. Substrate-binding positions include 578–582 (RDAHQ) and arginine 651. Residue aspartate 579 participates in a divalent metal cation binding. 3 residues coordinate a divalent metal cation: lysine 747, histidine 777, and histidine 779. N6-carboxylysine is present on lysine 747. Threonine 912 contributes to the substrate binding site. One can recognise a Biotinyl-binding domain in the interval 1108–1183 (RADPGNPGHV…NGGDLCAVLE (76 aa)). Lysine 1149 is modified (N6-biotinyllysine).

Biotin is required as a cofactor. The cofactor is Zn(2+).

It is found in the cytoplasm. It catalyses the reaction hydrogencarbonate + pyruvate + ATP = oxaloacetate + ADP + phosphate + H(+). It functions in the pathway carbohydrate biosynthesis; gluconeogenesis. In terms of biological role, pyruvate carboxylase catalyzes a 2-step reaction, involving the ATP-dependent carboxylation of the covalently attached biotin in the first step and the transfer of the carboxyl group to pyruvate in the second. The chain is Pyruvate carboxylase (pyr1) from Schizosaccharomyces pombe (strain 972 / ATCC 24843) (Fission yeast).